A 154-amino-acid chain; its full sequence is Myoglobin (154 aa).

Positions 2 to 148 constitute a Globin domain; it reads GLSDQEWQQV…FRNDMASKYK (147 aa). Residue histidine 65 participates in nitrite binding. Position 65 (histidine 65) interacts with O2. Histidine 94 is a heme b binding site.

It belongs to the globin family. In terms of assembly, monomeric.

It localises to the cytoplasm. The protein resides in the sarcoplasm. It catalyses the reaction Fe(III)-heme b-[protein] + nitric oxide + H2O = Fe(II)-heme b-[protein] + nitrite + 2 H(+). The catalysed reaction is H2O2 + AH2 = A + 2 H2O. Its function is as follows. Monomeric heme protein which primary function is to store oxygen and facilitate its diffusion within muscle tissues. Reversibly binds oxygen through a pentacoordinated heme iron and enables its timely and efficient release as needed during periods of heightened demand. Depending on the oxidative conditions of tissues and cells, and in addition to its ability to bind oxygen, it also has a nitrite reductase activity whereby it regulates the production of bioactive nitric oxide. Under stress conditions, like hypoxia and anoxia, it also protects cells against reactive oxygen species thanks to its pseudoperoxidase activity. This chain is Myoglobin (MB), found in Cerorhinca monocerata (Rhinoceros auklet).